We begin with the raw amino-acid sequence, 711 residues long: Transferrin-binding protein B (711 aa).

Positions 1–20 (MNNPLVNQAAMVLPVFLLSA) are cleaved as a signal peptide. Residue cysteine 21 is the site of N-palmitoyl cysteine attachment. The S-diacylglycerol cysteine moiety is linked to residue cysteine 21. Disordered stretches follow at residues 33–58 (VDTE…QKDQ), 79–105 (SEVK…KRQK), 118–146 (DIYS…KNQA), 225–251 (SKKQ…ESTL), 370–396 (LENG…SENS), 437–492 (PKDS…GDTN), and 682–711 (TEKA…QPVQ). Over residues 46–56 (DVSSEKPQAQK) the composition is skewed to polar residues. Over residues 96–105 (KPKELPKRQK) the composition is skewed to basic and acidic residues. The span at 119–146 (IYSSPYLTPSNHQNGSAGNGVNQPKNQA) shows a compositional bias: polar residues. A compositionally biased stretch (low complexity) spans 373 to 393 (GAAASGSTGAAASGGAAGTSS). Residues 457 to 472 (FTRKFEHTPESDKKDA) show a composition bias toward basic and acidic residues. 2 stretches are compositionally biased toward polar residues: residues 474-492 (AGTQ…GDTN) and 684-699 (KATA…SSAT).

This sequence belongs to the TbpB family. Isotype II subfamily. As to quaternary structure, binds only human holo-transferrin (TF), via the TF C-terminus. Forms a large complex with TbpA and TF. Interacts via its C-terminal domain with Slam1.

Its subcellular location is the cell outer membrane. It is found in the cell surface. Its function is as follows. Neisseria acquires iron by extracting it from serum transferrin (TF) in its human host. Acts as a TF receptor and is required for TF utilization. Involved in the initial capture of TF. Helps select only those TF molecules that can be used as an iron source and concentrates them on the cell surface, maintaining the iron-loaded status of the TF C-terminal lobe until its delivery to TbpA. The chain is Transferrin-binding protein B (tbpB) from Neisseria meningitidis serogroup B.